Consider the following 88-residue polypeptide: Elongation factor 1-beta (88 aa).

The protein belongs to the EF-1-beta/EF-1-delta family.

Its function is as follows. Promotes the exchange of GDP for GTP in EF-1-alpha/GDP, thus allowing the regeneration of EF-1-alpha/GTP that could then be used to form the ternary complex EF-1-alpha/GTP/AAtRNA. In Archaeoglobus fulgidus (strain ATCC 49558 / DSM 4304 / JCM 9628 / NBRC 100126 / VC-16), this protein is Elongation factor 1-beta (ef1b).